The following is a 320-amino-acid chain: Cytochrome f (320 aa).

A signal peptide spans 1 to 35 (MQTRNTFSWIREEITRSISVLLMIYIITWASISSA). Residues Y36, C56, C59, and H60 each coordinate heme. A helical membrane pass occupies residues 286–306 (VQGLLFFLGSVVLAQIFLVLK).

The protein belongs to the cytochrome f family. In terms of assembly, the 4 large subunits of the cytochrome b6-f complex are cytochrome b6, subunit IV (17 kDa polypeptide, petD), cytochrome f and the Rieske protein, while the 4 small subunits are PetG, PetL, PetM and PetN. The complex functions as a dimer. The cofactor is heme.

It is found in the plastid. The protein localises to the chloroplast thylakoid membrane. Component of the cytochrome b6-f complex, which mediates electron transfer between photosystem II (PSII) and photosystem I (PSI), cyclic electron flow around PSI, and state transitions. The polypeptide is Cytochrome f (Lobularia maritima (Sweet alyssum)).